The sequence spans 467 residues: MSTQSVIAVKQFSGPDKIAQAYTVPQPSAHVLSNANYDYDLCGSTNSTSLSCAIQSSNIKTESISSSSLPKILPFSTDSNGESSLSRMSQAEFSDPILSSSSTFCTSLYTSSPMNSGSCRKTGYLPFLPQPPKCEQQQNSAGQSSSSLMLLDADLRNSGHADDEHTDDLKDFLNLSSDCSFHGKCSAMAYNEQMEFQFLSEQLGIAISNNEESPRLDDIYDRPPQLMSLPVSSCSDQEDLQDARSPAKVQLSSSRSSSGTASCNKPRLRWTPELHERFVDAVNKLEGPEKATPKGVLKLMKVEGLTIYHIKSHLQKYRLAKYLPETKEDKKQEEKKTKSVANGNDHAKKKSAQMAEALRMQMEVQKQLHEQLEVQRQLQLRIEEHARYLQKILEEQQKARESISSMTSTTEGESPEFAPMEKTEDKAETSSAPLSKCRITDTDAECHSKVDNKKTKPQADLEMVHDE.

Positions 227–266 are disordered; the sequence is MSLPVSSCSDQEDLQDARSPAKVQLSSSRSSSGTASCNKP. Residues 262–322 enclose the HTH myb-type domain; sequence SCNKPRLRWT…HLQKYRLAKY (61 aa). Positions 293–318 form a DNA-binding region, H-T-H motif; it reads PKGVLKLMKVEGLTIYHIKSHLQKYR. Over residues 327 to 337 the composition is skewed to basic and acidic residues; it reads KEDKKQEEKKT. Disordered regions lie at residues 327–353 and 400–467; these read KEDKKQEEKKTKSVANGNDHAKKKSAQ and RESI…VHDE. Polar residues predominate over residues 402–412; it reads SISSMTSTTEG. 2 stretches are compositionally biased toward basic and acidic residues: residues 419–428 and 438–467; these read PMEKTEDKAE and RITDTDAECHSKVDNKKTKPQADLEMVHDE.

As to expression, expressed in the root cap and in the exodermis of the root, in the root tip of lateral roots, in the mesophyll cells of the leaf, in pollen, vascular cylinder of the anther and the veins of the lemma, palea and pistils, and in the xylem and phloem regions of large vascular bundles, small vascular bundles and diffuse vascular bundles in node I.

Its subcellular location is the nucleus. Its function is as follows. Transcription factor involved in phosphate starvation signaling. Binds to P1BS, an imperfect palindromic sequence 5'-GNATATNC-3', to promote the expression of inorganic phosphate (Pi) starvation-responsive genes. Functionally redundant with PHR1 and PHR2 in regulating Pi starvation response and Pi homeostasis. The chain is Protein PHOSPHATE STARVATION RESPONSE 3 from Oryza sativa subsp. japonica (Rice).